Reading from the N-terminus, the 571-residue chain is Cationic amino acid transporter 8 (571 aa).

Asn-35 is a glycosylation site (N-linked (GlcNAc...) asparagine). Transmembrane regions (helical) follow at residues 39–59, 94–114, 117–137, 148–168, 177–197, and 217–237; these read FWLLVIIVIYTATSACIYFDW, SLYPITLAIHFTMSVFCGFLY, IGPKFTAIIGQMCNIMSWVFL, FLSFVFLGLGADTAFIPILTI, TFILTVVGAAASLSYAVPATL, and IFLILVPCLLVATFLLPLMPF. 3 N-linked (GlcNAc...) asparagine glycosylation sites follow: Asn-298, Asn-325, and Asn-346. A helical transmembrane segment spans residues 365–385; it reads LFFKVLLSYPSICIIVYFILF. N-linked (GlcNAc...) asparagine glycosylation is present at Asn-386. The next 5 helical transmembrane spans lie at 405–425, 433–453, 461–481, 488–508, and 528–548; these read SIINIINILMPISCIPCIIFG, SAIIIILMNAFSALMHLTALI, VSAFLYMCVTSIYTSQIYCFI, VVFGKLLGFASLCGGLFSLLC, and VVLLLVIAFILMFLPLTVLYF.

It belongs to the SLC43A transporter (TC 2.A.1.44) family.

Its subcellular location is the membrane. It catalyses the reaction L-arginine(in) = L-arginine(out). Its function is as follows. Sodium-independent cationic amino acid transporter. Transports L-arginine, L-lysine, L-histidine and L-ornithine. This chain is Cationic amino acid transporter 8, found in Plasmodium vivax (strain Salvador I).